The chain runs to 477 residues: RNA pseudouridine synthase 6, chloroplastic (477 aa).

The transit peptide at 1-52 (MPKAAASLASLLPQLWHRPVQPPPFLHRALSSSSPLLRRHRAALHSPAAPLS) directs the protein to the chloroplast. The S4 RNA-binding domain maps to 98–205 (EVAVDFISRS…FPRCYEIDWK (108 aa)). Aspartate 258 is a catalytic residue.

This sequence belongs to the pseudouridine synthase RluA family.

It localises to the plastid. The protein resides in the chloroplast. The catalysed reaction is a uridine in RNA = a pseudouridine in RNA. The polypeptide is RNA pseudouridine synthase 6, chloroplastic (Oryza sativa subsp. japonica (Rice)).